Here is a 216-residue protein sequence, read N- to C-terminus: Ribosomal RNA large subunit methyltransferase E (216 aa).

5 residues coordinate S-adenosyl-L-methionine: G71, W73, D88, D104, and D126. K166 serves as the catalytic Proton acceptor.

The protein belongs to the class I-like SAM-binding methyltransferase superfamily. RNA methyltransferase RlmE family.

It is found in the cytoplasm. It carries out the reaction uridine(2552) in 23S rRNA + S-adenosyl-L-methionine = 2'-O-methyluridine(2552) in 23S rRNA + S-adenosyl-L-homocysteine + H(+). Specifically methylates the uridine in position 2552 of 23S rRNA at the 2'-O position of the ribose in the fully assembled 50S ribosomal subunit. The chain is Ribosomal RNA large subunit methyltransferase E from Wolbachia sp. subsp. Brugia malayi (strain TRS).